Reading from the N-terminus, the 421-residue chain is Serine--tRNA ligase (421 aa).

229–231 (TSE) is a binding site for L-serine. Residues 260-262 (RKE) and Val276 each bind ATP. Glu283 contributes to the L-serine binding site. 347 to 350 (EIVS) is an ATP binding site. Residue Thr383 participates in L-serine binding.

It belongs to the class-II aminoacyl-tRNA synthetase family. Type-1 seryl-tRNA synthetase subfamily. As to quaternary structure, homodimer. The tRNA molecule binds across the dimer.

Its subcellular location is the cytoplasm. The catalysed reaction is tRNA(Ser) + L-serine + ATP = L-seryl-tRNA(Ser) + AMP + diphosphate + H(+). The enzyme catalyses tRNA(Sec) + L-serine + ATP = L-seryl-tRNA(Sec) + AMP + diphosphate + H(+). Its pathway is aminoacyl-tRNA biosynthesis; selenocysteinyl-tRNA(Sec) biosynthesis; L-seryl-tRNA(Sec) from L-serine and tRNA(Sec): step 1/1. Catalyzes the attachment of serine to tRNA(Ser). Is also able to aminoacylate tRNA(Sec) with serine, to form the misacylated tRNA L-seryl-tRNA(Sec), which will be further converted into selenocysteinyl-tRNA(Sec). The chain is Serine--tRNA ligase from Nitrosopumilus maritimus (strain SCM1).